Here is a 798-residue protein sequence, read N- to C-terminus: Cation channel sperm-associated auxiliary subunit delta (798 aa).

An N-terminal signal peptide occupies residues 1–20; it reads MLMLMLVAAVTMWLRPLVTA. Residues 21 to 723 lie on the Extracellular side of the membrane; the sequence is QLCRSRTVRT…AFPVQLVSAG (703 aa). 7 cysteine pairs are disulfide-bonded: cysteine 23/cysteine 369, cysteine 59/cysteine 145, cysteine 144/cysteine 152, cysteine 387/cysteine 496, cysteine 510/cysteine 701, cysteine 525/cysteine 572, and cysteine 624/cysteine 652. Residue asparagine 123 is glycosylated (N-linked (GlcNAc...) asparagine). 5 N-linked (GlcNAc...) asparagine glycosylation sites follow: asparagine 230, asparagine 240, asparagine 472, asparagine 538, and asparagine 630. The helical transmembrane segment at 724 to 745 threads the bilayer; it reads VVILLIISSILGSVWLAYKTPK. The Cytoplasmic portion of the chain corresponds to 746 to 798; that stretch reads LLRTARGRRIKKCATQLCRRCKTVCQFRASATARAGTEPPGRHRTPHGGRSDH.

It belongs to the CATSPERD family. As to quaternary structure, component of the CatSper complex or CatSpermasome composed of the core pore-forming members CATSPER1, CATSPER2, CATSPER3 and CATSPER4 as well as auxiliary members CATSPERB, CATSPERG, CATSPERD, CATSPERE, CATSPERZ, C2CD6/CATSPERT, TMEM249, TMEM262 and EFCAB9. HSPA1 may be an additional auxiliary complex member. The core complex members CATSPER1, CATSPER2, CATSPER3 and CATSPER4 form a heterotetrameric channel. The auxiliary CATSPERB, CATSPERG, CATSPERD and CATSPERE subunits form a pavilion-like structure over the pore which stabilizes the complex through interactions with CATSPER4, CATSPER3, CATSPER1 and CATSPER2 respectively. TMEM262/CATSPERH interacts with CATSPERB, further stabilizing the complex. C2CD6/CATSPERT interacts at least with CATSPERD and is required for targeting the CatSper complex in the flagellar membrane.

It is found in the cell projection. The protein resides in the cilium. The protein localises to the flagellum membrane. Auxiliary component of the CatSper complex, a complex involved in sperm cell hyperactivation. Sperm cell hyperactivation is needed for sperm motility which is essential late in the preparation of sperm for fertilization. Required for CATSPER1 stability before intraflagellar transport and/or incorporation of the CatSper complex channel into the flagellar membrane. The chain is Cation channel sperm-associated auxiliary subunit delta from Homo sapiens (Human).